The chain runs to 887 residues: MTSTNDIRRSFLDHFAKEGHELVPSAPLVPHNDPTLMFVNAGMVPFKNVFTGLEKRPYSTATSSQKCVRAGGKHNDLDNVGYTARHHTFFEMLGNFSFGDYFKERAISLAWSLITGTWGIPADRLTVTVFHTDDEAFDLWKKIGMPDSRIIRIPTSDNFWSMGDTGPCGPCSEIFYDHGAHIPGGPPGSPDEDGDRFVEIWNLVFMQYEQVDKETRIDLPRPSIDTGMGLERIAAVLQGVHDNYDTDTFKALIAASGELTRTATNGDFKASHRVIADHLRASGFLVADGVLPANEGRGYVLRRIMRRAMRHAHLLGAAEPLMHRLVPSLVAEMGAAYPELVRAQPLIEETLKLEETRFRQTLANGLRLLDEATGAMKPGDVLPGAVAFKLYDTFGFPYDLTEDALRAQDLGVDRSGFDAAMAEQKAAARAAWKGSGEKASDEVWFDIAEEFGGTEFTGYVSEEGDGQLLAIVKDGQRVAEAKAGDEVVLVTNQTPFYGESGGQMGDAGRITGDDGLEIAVEDTAKPLGRVHAHRGTVVSGSVRTGDALHLVVDGDRRTRIRANHSATHLLHAALRNRLGSHVTQKGSLVAADRFRFDFSHPKALTPEDIAAIEAEVNRHIRENDEVTTRLMTPDAAIEAGAMALFGEKYGDEVRVLSMGKAGRDLGAKSYSVELCGGTHVSALGDIALFKIISESAVSSGVRRIEALTGEAARQWLTQRDEKLKEAAAALKTAPDDVPARIAVLVEERRKLERELAEAKKALALGGGSKAEAAGPEDVAGVKFLPQVVDGLDPKGLRGLVDDAKASLGSGVSVIVAVNDGRASVAAGVTADLVDRISAVDLVKAAVAALGGQGGGGRPDMAQGGGPDGDKAADAVAAVRDALAKVPA.

Zn(2+)-binding residues include His-564, His-568, Cys-675, and His-679. A compositionally biased stretch (gly residues) spans 851–866 (GQGGGGRPDMAQGGGP). Positions 851 to 871 (GQGGGGRPDMAQGGGPDGDKA) are disordered.

Belongs to the class-II aminoacyl-tRNA synthetase family. Zn(2+) is required as a cofactor.

The protein localises to the cytoplasm. It catalyses the reaction tRNA(Ala) + L-alanine + ATP = L-alanyl-tRNA(Ala) + AMP + diphosphate. In terms of biological role, catalyzes the attachment of alanine to tRNA(Ala) in a two-step reaction: alanine is first activated by ATP to form Ala-AMP and then transferred to the acceptor end of tRNA(Ala). Also edits incorrectly charged Ser-tRNA(Ala) and Gly-tRNA(Ala) via its editing domain. The chain is Alanine--tRNA ligase from Rhizorhabdus wittichii (strain DSM 6014 / CCUG 31198 / JCM 15750 / NBRC 105917 / EY 4224 / RW1) (Sphingomonas wittichii).